Consider the following 475-residue polypeptide: Putative F-box protein At3g58960 (475 aa).

The region spanning 1–49 (MDRISSLSNDIISNIVSFLSAKDAAVASVLSKRWQNIYTIVPNLEFDNT) is the F-box domain.

This Arabidopsis thaliana (Mouse-ear cress) protein is Putative F-box protein At3g58960.